The chain runs to 206 residues: ATP-dependent Clp protease proteolytic subunit 2 (206 aa).

The Nucleophile role is filled by S100. H125 is an active-site residue.

The protein belongs to the peptidase S14 family. As to quaternary structure, fourteen ClpP subunits assemble into 2 heptameric rings which stack back to back to give a disk-like structure with a central cavity, resembling the structure of eukaryotic proteasomes.

The protein resides in the cytoplasm. It catalyses the reaction Hydrolysis of proteins to small peptides in the presence of ATP and magnesium. alpha-casein is the usual test substrate. In the absence of ATP, only oligopeptides shorter than five residues are hydrolyzed (such as succinyl-Leu-Tyr-|-NHMec, and Leu-Tyr-Leu-|-Tyr-Trp, in which cleavage of the -Tyr-|-Leu- and -Tyr-|-Trp bonds also occurs).. Its function is as follows. Cleaves peptides in various proteins in a process that requires ATP hydrolysis. Has a chymotrypsin-like activity. Plays a major role in the degradation of misfolded proteins. This Myxococcus xanthus protein is ATP-dependent Clp protease proteolytic subunit 2.